A 173-amino-acid chain; its full sequence is Large ribosomal subunit protein uL10 (173 aa).

Belongs to the universal ribosomal protein uL10 family. Part of the ribosomal stalk of the 50S ribosomal subunit. The N-terminus interacts with L11 and the large rRNA to form the base of the stalk. The C-terminus forms an elongated spine to which L12 dimers bind in a sequential fashion forming a multimeric L10(L12)X complex.

Functionally, forms part of the ribosomal stalk, playing a central role in the interaction of the ribosome with GTP-bound translation factors. In Thermus thermophilus (strain ATCC BAA-163 / DSM 7039 / HB27), this protein is Large ribosomal subunit protein uL10.